The primary structure comprises 352 residues: Deoxyhypusine synthase-like protein (352 aa).

It belongs to the deoxyhypusine synthase family.

This chain is Deoxyhypusine synthase-like protein, found in Coxiella burnetii (strain Dugway 5J108-111).